The sequence spans 571 residues: Streptolysin O (571 aa).

An N-terminal signal peptide occupies residues 1–33 (MSNKKTFKKYSRVAGLLTAALIIGNLVTANAES). Positions 30–108 (NAESNKQNTA…KKSEEDHTEE (79 aa)) are disordered. Low complexity predominate over residues 37-48 (NTASTETTTTNE). 2 stretches are compositionally biased toward basic and acidic residues: residues 50 to 68 (PKPE…KTDD) and 79 to 108 (APKE…HTEE). Transmembrane regions (beta stranded) follow at residues 260-273 (KSQI…NSKI), 280-289 (IDFKSISKGE), 358-367 (SNDVEAAFSA), and 375-387 (KTNG…LENS). Positions 529 to 539 (ECTGLAWEWWR) match the Conserved undecapeptide motif. The Cholesterol binding signature appears at 561-562 (TL).

This sequence belongs to the cholesterol-dependent cytolysin family. Homooligomeric pore complex of 35 to 50 subunits; when inserted in the host membrane.

The protein localises to the secreted. The protein resides in the host cell membrane. A cholesterol-dependent toxin that causes cytolysis by forming pores in cholesterol containing host membranes. After binding to target membranes, the protein undergoes a major conformation change, leading to its insertion in the host membrane and formation of an oligomeric pore complex. Cholesterol is required for binding to host membranes, membrane insertion and pore formation; cholesterol binding is mediated by a Thr-Leu pair in the C-terminus. Can be reversibly inactivated by oxidation. The sequence is that of Streptolysin O (slo) from Streptococcus pyogenes serotype M3 (strain ATCC BAA-595 / MGAS315).